Reading from the N-terminus, the 55-residue chain is Small ribosomal subunit protein uS14 (55 aa).

Residues 1-20 (MSFEPSGPHSHRKPFGKGSR) are disordered. Zn(2+)-binding residues include cysteine 22, cysteine 25, cysteine 38, and cysteine 41.

Belongs to the universal ribosomal protein uS14 family. The cofactor is Zn(2+).

The protein is Small ribosomal subunit protein uS14 (RPS29) of Encephalitozoon cuniculi (strain GB-M1) (Microsporidian parasite).